A 478-amino-acid chain; its full sequence is Cytochrome P450 monooxygenase ATR3 (478 aa).

A helical membrane pass occupies residues 20 to 42 (AVAFVTASALYYVLPAAISHIQL). N-linked (GlcNAc...) asparagine glycosylation is found at Asn159 and Asn268.

The protein belongs to the cytochrome P450 family. It depends on heme as a cofactor.

Its subcellular location is the membrane. Its pathway is mycotoxin biosynthesis. Its function is as follows. Cytochrome P450 monooxygenase; part of the core atranone cluster (CAC) which products are predicted to catalyze most or all steps of mycotoxin atranone synthesis, starting from geranylgeranyl pyrophosphate (GGPP). The initial cyclization of GGPP to dolabellane is probably performed by the terpene cyclase ATR13. The Baeyer-Villiger oxidation near the end of the atranone synthesis, which converts atranones D and E to atranones F and G is predicted to be catalyzed by the monooxygenase ATR8. Of the CAC's other predicted gene products, the reducing PKS ATR6 might synthesize a polyketide chain. This polyketide is probably transferred onto the atranone backbone by the polyketide transferase ATR5. Other predicted CAC products include 4 oxygenases (ATR2, ATR3, ATR4, and ATR14), 3 short-chain reductases (ATR7, ATR9, and ATR10), and a methyltransferase (ATR12). These may all be involved in the various steps of atranone biosynthesis, although their specific roles must await experimental determination. This Stachybotrys chlorohalonatus (strain IBT 40285) protein is Cytochrome P450 monooxygenase ATR3.